A 567-amino-acid chain; its full sequence is Cytochrome P450 monooxygenase 79 (567 aa).

The chain crosses the membrane as a helical span at residues 7–24; it reads ELAILAIVLLVTAVVFYT. Residues N223 and N279 are each glycosylated (N-linked (GlcNAc...) asparagine). Residue C475 coordinates heme.

This sequence belongs to the cytochrome P450 family. Heme is required as a cofactor.

It is found in the membrane. Its pathway is secondary metabolite biosynthesis. In terms of biological role, cytochrome P450 monooxygenase that is able to use dehydroabietic acid as a substrate for oxidation. In Postia placenta (strain ATCC 44394 / Madison 698-R) (Brown rot fungus), this protein is Cytochrome P450 monooxygenase 79.